The primary structure comprises 440 residues: Tumor necrosis factor receptor superfamily member 10B (440 aa).

2 disordered regions span residues 1 to 32 (MEQRGQNAPAASGARKRHGPGPREARGARPGP) and 60 to 84 (DLAPQQRAAPQQKRSSPSEGLCPPG). Positions 1-55 (MEQRGQNAPAASGARKRHGPGPREARGARPGPRVPKTLVLVVAAVLLLVSAESAL) are cleaved as a signal peptide. Residues 56–210 (ITQQDLAPQQ…SPGTPASPCS (155 aa)) lie on the Extracellular side of the membrane. TNFR-Cys repeat units follow at residues 57 to 94 (TQQDLAPQQRAAPQQKRSSPSEGLCPPGHHISEDGRDC), 97 to 137 (CKYG…NTVC), and 138 to 178 (QCEE…DIEC). Over residues 60 to 71 (DLAPQQRAAPQQ) the composition is skewed to low complexity. Cystine bridges form between Cys81–Cys94, Cys97–Cys113, Cys116–Cys129, Cys119–Cys137, Cys139–Cys153, Cys156–Cys170, and Cys160–Cys178. The TAPE repeat unit spans residues 192–206 (PAVEETVTSSPGTPA). The helical transmembrane segment at 211 to 231 (LSGIIIGVTVAAVVLIVAVFV) threads the bilayer. Over 232-440 (CKSLLWKKVL…LEGNADSAMS (209 aa)) the chain is Cytoplasmic. Residues 339 to 422 (RQCFDDFADL…LAKQKIEDHL (84 aa)) form the Death domain.

In terms of assembly, monomer. Can interact with TRADD and RIPK1. Interacts with HCMV protein UL141; this interaction prevents TNFRSF10B cell surface expression. Two TNFRSF10B monomers interact with a UL141 homodimer. Three TNFRSF10B molecules interact with TNFSF10 homotrimer. In the absence of stimulation, interacts with BIRC2, DDX3X and GSK3B. The interaction with BIRC2 and DDX3X is further enhanced upon receptor stimulation and accompanied by DDX3X and BIRC2 cleavage. In terms of processing, (Microbial infection) Glycosylated on Arg residue by S.typhimurium protein Ssek3. Widely expressed in adult and fetal tissues; very highly expressed in tumor cell lines such as HeLaS3, K-562, HL-60, SW480, A-549 and G-361; highly expressed in heart, peripheral blood lymphocytes, liver, pancreas, spleen, thymus, prostate, ovary, uterus, placenta, testis, esophagus, stomach and throughout the intestinal tract; not detectable in brain.

The protein resides in the membrane. Receptor for the cytotoxic ligand TNFSF10/TRAIL. The adapter molecule FADD recruits caspase-8 to the activated receptor. The resulting death-inducing signaling complex (DISC) performs caspase-8 proteolytic activation which initiates the subsequent cascade of caspases (aspartate-specific cysteine proteases) mediating apoptosis. Promotes the activation of NF-kappa-B. Essential for ER stress-induced apoptosis. This Homo sapiens (Human) protein is Tumor necrosis factor receptor superfamily member 10B (TNFRSF10B).